The chain runs to 1262 residues: Cytoplasmic FMR1-interacting protein homolog (1262 aa).

Residues 519–550 (LNRMTDVKGKKKSSAPKGDSANSSSSDIRIPR) are disordered.

This sequence belongs to the CYFIP family. Interacts with gex-3.

The protein resides in the cytoplasm. Its function is as follows. Required for initial steps of body morphogenesis. May play a role in egg laying and yolk protein clatherin-mediated endocytosis by oocytes during oogenesis. Plays a role in the formation of muscle connections, also called muscle arm extensions, between the body wall and the motor axons in the dorsal and ventral cord. The protein is Cytoplasmic FMR1-interacting protein homolog of Caenorhabditis elegans.